The chain runs to 944 residues: Neutral alpha-glucosidase AB (944 aa).

The N-terminal stretch at 1-32 (MAAIAAVAARRRRSWLSLVLAYLGVCLGITLA) is a signal peptide. Cys-41 and Cys-47 form a disulfide bridge. A Phosphoserine modification is found at Ser-52. A glycan (N-linked (GlcNAc...) asparagine) is linked at Asn-97. Residues 180–238 (HQRAPRVPQESKDPAEGNGAQPEATPGDGDKPEETQEKAEKDEPGAWEETFKTHSDSKP) form a disordered region. Over residues 207-236 (DGDKPEETQEKAEKDEPGAWEETFKTHSDS) the composition is skewed to basic and acidic residues. Substrate-binding residues include Asp-283 and Asp-429. The active-site Nucleophile is Asp-542. Arg-602 contacts substrate. Catalysis depends on Asp-618, which acts as the Proton donor. Cys-633 and Cys-644 are joined by a disulfide. Residue His-676 participates in substrate binding.

The protein belongs to the glycosyl hydrolase 31 family. As to quaternary structure, heterodimer of a catalytic alpha subunit (GANAB) and a beta subunit (PRKCSH). Binds glycosylated PTPRC.

It is found in the endoplasmic reticulum. The protein resides in the golgi apparatus. The protein localises to the melanosome. It catalyses the reaction N(4)-(alpha-D-Glc-(1-&gt;3)-alpha-D-Man-(1-&gt;2)-alpha-D-Man-(1-&gt;2)-alpha-D-Man-(1-&gt;3)-[alpha-D-Man-(1-&gt;2)-alpha-D-Man-(1-&gt;3)-[alpha-D-Man-(1-&gt;2)-alpha-D-Man-(1-&gt;6)]-alpha-D-Man-(1-&gt;6)]-beta-D-Man-(1-&gt;4)-beta-D-GlcNAc-(1-&gt;4)-beta-D-GlcNAc)-L-asparaginyl-[protein] + H2O = N(4)-(alpha-D-Man-(1-&gt;2)-alpha-D-Man-(1-&gt;2)-alpha-D-Man-(1-&gt;3)-[alpha-D-Man-(1-&gt;2)-alpha-D-Man-(1-&gt;3)-[alpha-D-Man-(1-&gt;2)-alpha-D-Man-(1-&gt;6)]-alpha-D-Man-(1-&gt;6)]-beta-D-Man-(1-&gt;4)-beta-D-GlcNAc-(1-&gt;4)-beta-D-GlcNAc)-L-asparaginyl-[protein] (N-glucan mannose isomer 9A1,2,3B1,2,3) + beta-D-glucose. The catalysed reaction is N(4)-(alpha-D-Glc-(1-&gt;3)-alpha-D-Glc-(1-&gt;3)-alpha-D-Man-(1-&gt;2)-alpha-D-Man-(1-&gt;2)-alpha-D-Man-(1-&gt;3)-[alpha-D-Man-(1-&gt;2)-alpha-D-Man-(1-&gt;3)-[alpha-D-Man-(1-&gt;2)-alpha-D-Man-(1-&gt;6)]-alpha-D-Man-(1-&gt;6)]-beta-D-Man-(1-&gt;4)-beta-D-GlcNAc-(1-&gt;4)-beta-D-GlcNAc)-L-asparaginyl-[protein] + H2O = N(4)-(alpha-D-Glc-(1-&gt;3)-alpha-D-Man-(1-&gt;2)-alpha-D-Man-(1-&gt;2)-alpha-D-Man-(1-&gt;3)-[alpha-D-Man-(1-&gt;2)-alpha-D-Man-(1-&gt;3)-[alpha-D-Man-(1-&gt;2)-alpha-D-Man-(1-&gt;6)]-alpha-D-Man-(1-&gt;6)]-beta-D-Man-(1-&gt;4)-beta-D-GlcNAc-(1-&gt;4)-beta-D-GlcNAc)-L-asparaginyl-[protein] + beta-D-glucose. The protein operates within glycan metabolism; N-glycan metabolism. Catalytic subunit of glucosidase II that cleaves sequentially the 2 innermost alpha-1,3-linked glucose residues from the Glc(2)Man(9)GlcNAc(2) oligosaccharide precursor of immature glycoproteins. Required for PKD1/Polycystin-1 and PKD2/Polycystin-2 maturation and localization to the cell surface and cilia. The sequence is that of Neutral alpha-glucosidase AB from Mus musculus (Mouse).